The following is a 601-amino-acid chain: MTVDRNYIRNFSIVAHIDHGKSTLADRLIQMTGGLETREMKEQVLDSMDIERERGITIKAQTVRLHYKAKNGETYILNLIDTPGHVDFAYEVSRSLAACEGSLLVVDASQGVEAQTLANVYQAIDNSHELVVVLNKVDLPAAEPERVKEQIEDVIGIDTSEAVEISAKTGLGVSDVLEAIVTQLPSPRTGDVNKPLKAMLVDSWYDAYLGVIVLVRVIDGILKKGQIIRMMGTGAKYPVERVGVFTPKMIQVDELGPGEIGFITASIKEVADTRVGDTITEERCPCEEALPGFKPAQPVVFCGLFPIDAADFDDLRAAMGKLRLNDASFSFEVETSAALGFGFRCGFLGLLHLEIIQERLEREFNLDLIATAPSVVYRMNMHDGSVKELHNPADMPDIVKISSIEEPWIRATIMTPDNYLGSVLELCQERRGIQVSLSYVGTRAMVTYDLPLNEVVFDFYDRLKSISKGYASFDYQMRDYTEGDLVKMSILVNGESIDALSMLVHRTIAEKRGRSLCEKLKDLIPQHMFQIPIQAAIGGKIIARETIRALRKDVTAKCYGGDVTRKRKLLEKQKEGKKRMRQFGKVEIPQSAFIQALKMNK.

The tr-type G domain maps to 6 to 188; sequence NYIRNFSIVA…AIVTQLPSPR (183 aa). GTP contacts are provided by residues 18-23 and 135-138; these read DHGKST and NKVD.

It belongs to the TRAFAC class translation factor GTPase superfamily. Classic translation factor GTPase family. LepA subfamily.

It is found in the cell inner membrane. It carries out the reaction GTP + H2O = GDP + phosphate + H(+). In terms of biological role, required for accurate and efficient protein synthesis under certain stress conditions. May act as a fidelity factor of the translation reaction, by catalyzing a one-codon backward translocation of tRNAs on improperly translocated ribosomes. Back-translocation proceeds from a post-translocation (POST) complex to a pre-translocation (PRE) complex, thus giving elongation factor G a second chance to translocate the tRNAs correctly. Binds to ribosomes in a GTP-dependent manner. The polypeptide is Elongation factor 4 (Bartonella henselae (strain ATCC 49882 / DSM 28221 / CCUG 30454 / Houston 1) (Rochalimaea henselae)).